Here is a 209-residue protein sequence, read N- to C-terminus: Histidine biosynthesis bifunctional protein HisIE (209 aa).

The phosphoribosyl-AMP cyclohydrolase stretch occupies residues 1-123 (MEIEKLLEQV…VLPIDYSLSI (123 aa)). The phosphoribosyl-ATP pyrophosphohydrolase stretch occupies residues 124–209 (LKELEEIIKR…VMNELRRRRK (86 aa)).

It in the N-terminal section; belongs to the PRA-CH family. In the C-terminal section; belongs to the PRA-PH family.

Its subcellular location is the cytoplasm. It catalyses the reaction 1-(5-phospho-beta-D-ribosyl)-ATP + H2O = 1-(5-phospho-beta-D-ribosyl)-5'-AMP + diphosphate + H(+). The enzyme catalyses 1-(5-phospho-beta-D-ribosyl)-5'-AMP + H2O = 1-(5-phospho-beta-D-ribosyl)-5-[(5-phospho-beta-D-ribosylamino)methylideneamino]imidazole-4-carboxamide. The protein operates within amino-acid biosynthesis; L-histidine biosynthesis; L-histidine from 5-phospho-alpha-D-ribose 1-diphosphate: step 2/9. It participates in amino-acid biosynthesis; L-histidine biosynthesis; L-histidine from 5-phospho-alpha-D-ribose 1-diphosphate: step 3/9. The protein is Histidine biosynthesis bifunctional protein HisIE (hisI) of Pyrococcus furiosus (strain ATCC 43587 / DSM 3638 / JCM 8422 / Vc1).